The chain runs to 405 residues: Tryptophan synthase beta chain (405 aa).

An N6-(pyridoxal phosphate)lysine modification is found at K98.

Belongs to the TrpB family. In terms of assembly, tetramer of two alpha and two beta chains. The cofactor is pyridoxal 5'-phosphate.

The catalysed reaction is (1S,2R)-1-C-(indol-3-yl)glycerol 3-phosphate + L-serine = D-glyceraldehyde 3-phosphate + L-tryptophan + H2O. It participates in amino-acid biosynthesis; L-tryptophan biosynthesis; L-tryptophan from chorismate: step 5/5. The beta subunit is responsible for the synthesis of L-tryptophan from indole and L-serine. The protein is Tryptophan synthase beta chain of Bradyrhizobium diazoefficiens (strain JCM 10833 / BCRC 13528 / IAM 13628 / NBRC 14792 / USDA 110).